A 265-amino-acid chain; its full sequence is Transcriptional activator AggR (265 aa).

The 98-residue stretch at D164–Y261 folds into the HTH araC/xylS-type domain. 2 DNA-binding regions (H-T-H motif) span residues A181 to Y202 and I228 to F251.

Homodimer.

Functionally, transcriptional activator of aggregative adherence fimbria I expression in enteroaggregative E.coli. In Escherichia coli, this protein is Transcriptional activator AggR (aggR).